Consider the following 515-residue polypeptide: Tabersonine 6,7-epoxidase isoform 2 (515 aa).

The chain crosses the membrane as a helical span at residues 1–21; that stretch reads MEFVVSPFAFLIFFFILLKMI. Residues Asn-173, Asn-259, and Asn-352 are each glycosylated (N-linked (GlcNAc...) asparagine). Cys-449 provides a ligand contact to heme.

It belongs to the cytochrome P450 family. It depends on heme as a cofactor. Mainly expressed in aerial organs, including stems, leaves and flowers.

It localises to the endoplasmic reticulum membrane. The catalysed reaction is (-)-tabersonine + reduced [NADPH--hemoprotein reductase] + O2 = lochnericine + oxidized [NADPH--hemoprotein reductase] + H2O + H(+). It functions in the pathway alkaloid biosynthesis. Functionally, component of the monoterpenoid indole alkaloids (MIAs, e.g. echitovenine, tabersonine, lochnericine, 19-hydroxytabersonine and horhammericine) biosynthetic pathway; MIAs are used in cancer treatment and other medical applications. Cytochrome P450 catalyzing the conversion of tabersonine to lochnericine. The chain is Tabersonine 6,7-epoxidase isoform 2 from Catharanthus roseus (Madagascar periwinkle).